The primary structure comprises 230 residues: Large ribosomal subunit protein uL1 (230 aa).

It belongs to the universal ribosomal protein uL1 family. Part of the 50S ribosomal subunit.

In terms of biological role, binds directly to 23S rRNA. The L1 stalk is quite mobile in the ribosome, and is involved in E site tRNA release. Protein L1 is also a translational repressor protein, it controls the translation of the L11 operon by binding to its mRNA. The sequence is that of Large ribosomal subunit protein uL1 from Nitrosospira multiformis (strain ATCC 25196 / NCIMB 11849 / C 71).